Here is a 136-residue protein sequence, read N- to C-terminus: ATP synthase epsilon chain (136 aa).

Belongs to the ATPase epsilon chain family. In terms of assembly, F-type ATPases have 2 components, CF(1) - the catalytic core - and CF(0) - the membrane proton channel. CF(1) has five subunits: alpha(3), beta(3), gamma(1), delta(1), epsilon(1). CF(0) has three main subunits: a, b and c.

The protein localises to the cell membrane. Produces ATP from ADP in the presence of a proton gradient across the membrane. The chain is ATP synthase epsilon chain from Exiguobacterium sp. (strain ATCC BAA-1283 / AT1b).